Here is a 119-residue protein sequence, read N- to C-terminus: Protein TusC (119 aa).

Belongs to the DsrF/TusC family. Heterohexamer, formed by a dimer of trimers. The hexameric TusBCD complex contains 2 copies each of TusB, TusC and TusD. The TusBCD complex interacts with TusE.

Its subcellular location is the cytoplasm. Functionally, part of a sulfur-relay system required for 2-thiolation of 5-methylaminomethyl-2-thiouridine (mnm(5)s(2)U) at tRNA wobble positions. The chain is Protein TusC from Pectobacterium atrosepticum (strain SCRI 1043 / ATCC BAA-672) (Erwinia carotovora subsp. atroseptica).